We begin with the raw amino-acid sequence, 88 residues long: MVKLRLKRCGRKQRAVYRIVVIDVRSRREGRDLRKVGFYDPINNQTYLNVPAILYFLEKGAQPTATVHDILKKAGVFTELTLNQTKFT.

It belongs to the bacterial ribosomal protein bS16 family.

It is found in the plastid. It localises to the chloroplast. The polypeptide is Small ribosomal subunit protein bS16c (Gossypium barbadense (Sea Island cotton)).